Consider the following 410-residue polypeptide: F-box/WD repeat-containing protein 4 (410 aa).

In terms of domain architecture, F-box spans 23-69; the sequence is GPALWRLPEELLLLICSYLDTRALGRLAQVCRWLRRFTSCDLLWRPI. WD repeat units follow at residues 159–196, 198–235, 289–327, and 333–372; these read GHDEDVCHFVLANSHIVSAGGDGKIGVHKIHSTFTVKY, AHEQEVNCVDCKGGIIVSGSRDRTAKVWPLASGRLGQC, PPGAGVLDVMYESPSTLLSCGYDTYVRYWDLRTSTRKCV, and PHDSTFYCLQTDGNHLLATGSSYYGLVRLWDRRQRACLHA.

Part of a SCF (SKP1-cullin-F-box) protein ligase complex. Interacts with POUF51.

In terms of biological role, probably recognizes and binds to some phosphorylated proteins and promotes their ubiquitination and degradation. Likely to be involved in key signaling pathways crucial for normal limb development. May participate in Wnt signaling. The chain is F-box/WD repeat-containing protein 4 (Fbxw4) from Mus musculus (Mouse).